The sequence spans 261 residues: 4-hydroxy-tetrahydrodipicolinate reductase (261 aa).

Residues 13–18 (GMAGRM), 91–93 (GTS), and 115–118 (APNF) contribute to the NAD(+) site. The active-site Proton donor/acceptor is histidine 149. Residue histidine 150 participates in (S)-2,3,4,5-tetrahydrodipicolinate binding. The active-site Proton donor is lysine 153. 159 to 160 (GT) contacts (S)-2,3,4,5-tetrahydrodipicolinate.

This sequence belongs to the DapB family.

The protein localises to the cytoplasm. It carries out the reaction (S)-2,3,4,5-tetrahydrodipicolinate + NAD(+) + H2O = (2S,4S)-4-hydroxy-2,3,4,5-tetrahydrodipicolinate + NADH + H(+). It catalyses the reaction (S)-2,3,4,5-tetrahydrodipicolinate + NADP(+) + H2O = (2S,4S)-4-hydroxy-2,3,4,5-tetrahydrodipicolinate + NADPH + H(+). The protein operates within amino-acid biosynthesis; L-lysine biosynthesis via DAP pathway; (S)-tetrahydrodipicolinate from L-aspartate: step 4/4. In terms of biological role, catalyzes the conversion of 4-hydroxy-tetrahydrodipicolinate (HTPA) to tetrahydrodipicolinate. This chain is 4-hydroxy-tetrahydrodipicolinate reductase, found in Granulibacter bethesdensis (strain ATCC BAA-1260 / CGDNIH1).